The chain runs to 668 residues: UvrABC system protein B (668 aa).

One can recognise a Helicase ATP-binding domain in the interval 27 to 413 (AGVQAGHRFQ…STQVVEQIIR (387 aa)). An ATP-binding site is contributed by 40 to 47 (GATGTGKT). The Beta-hairpin motif lies at 93–116 (YYDYYQPEAYIPVTDTYIEKSASI). In terms of domain architecture, Helicase C-terminal spans 430 to 596 (QVDDLYGEIR…PIVKKTSNAI (167 aa)). A UVR domain is found at 628-663 (PPLIQDLEAKMKAAAQELAFEEAARYRDQIKRLRDR).

It belongs to the UvrB family. Forms a heterotetramer with UvrA during the search for lesions. Interacts with UvrC in an incision complex.

It is found in the cytoplasm. Its function is as follows. The UvrABC repair system catalyzes the recognition and processing of DNA lesions. A damage recognition complex composed of 2 UvrA and 2 UvrB subunits scans DNA for abnormalities. Upon binding of the UvrA(2)B(2) complex to a putative damaged site, the DNA wraps around one UvrB monomer. DNA wrap is dependent on ATP binding by UvrB and probably causes local melting of the DNA helix, facilitating insertion of UvrB beta-hairpin between the DNA strands. Then UvrB probes one DNA strand for the presence of a lesion. If a lesion is found the UvrA subunits dissociate and the UvrB-DNA preincision complex is formed. This complex is subsequently bound by UvrC and the second UvrB is released. If no lesion is found, the DNA wraps around the other UvrB subunit that will check the other stand for damage. The sequence is that of UvrABC system protein B from Thermosynechococcus vestitus (strain NIES-2133 / IAM M-273 / BP-1).